Here is a 68-residue protein sequence, read N- to C-terminus: Large ribosomal subunit protein uL30 (68 aa).

The tract at residues 1–26 is disordered; the sequence is MSAKKSASKATVTVQQIGSPLRREPS. Over residues 8–18 the composition is skewed to polar residues; sequence SKATVTVQQIG.

It belongs to the universal ribosomal protein uL30 family. In terms of assembly, part of the 50S ribosomal subunit.

The chain is Large ribosomal subunit protein uL30 from Parvibaculum lavamentivorans (strain DS-1 / DSM 13023 / NCIMB 13966).